We begin with the raw amino-acid sequence, 512 residues long: Glutathione-binding protein GsiB (512 aa).

Positions 1–26 (MARAVHRSGLVALGIATALMASCAFA) are cleaved as a signal peptide.

Belongs to the bacterial solute-binding protein 5 family. As to quaternary structure, the complex is composed of two ATP-binding proteins (GsiA), two transmembrane proteins (GsiC and GsiD) and a solute-binding protein (GsiB).

It is found in the periplasm. In terms of biological role, part of the ABC transporter complex GsiABCD involved in glutathione import. Binds glutathione. The sequence is that of Glutathione-binding protein GsiB from Shigella flexneri.